Consider the following 416-residue polypeptide: Casein kinase I isoform epsilon (416 aa).

Residues 9-277 (YRLGRKIGSG…YLRQLFRNLF (269 aa)) enclose the Protein kinase domain. ATP contacts are provided by residues 15 to 23 (IGSGSFGDI) and lysine 38. The active-site Proton acceptor is aspartate 128. Positions 301–318 (PEDVDRERREHEREERMG) are enriched in basic and acidic residues. The interval 301 to 416 (PEDVDRERRE…TSVPFDHLGK (116 aa)) is disordered. A phosphoserine mark is found at serine 343 and serine 354. Positions 351-365 (TPASRIQQTGNTSPR) are enriched in polar residues. A Phosphothreonine modification is found at threonine 362. Residue serine 363 is modified to Phosphoserine. An Omega-N-methylarginine modification is found at arginine 382. 3 positions are modified to phosphoserine: serine 389, serine 405, and serine 408.

Belongs to the protein kinase superfamily. CK1 Ser/Thr protein kinase family. Casein kinase I subfamily. In terms of assembly, monomer. Component of the circadian core oscillator, which includes the CRY proteins, CLOCK, or NPAS2, ARTNL/BMAL1 or ARTNL2/BMAL2, CSNK1D and/or CSNK1E, TIMELESS and the PER proteins. Interacts with ANKRD6. Interacts with PER1. Interacts with DBNDD2, LRP5, LRP6 and SOCS3. Interacts with SNAI1 (via zinc fingers). Interacts with DDX3X; this interaction greatly enhances CSNK1E affinity for ATP and DVL2 phosphorylation, but inhibits DDX3X ATPase/helicase activity. In the presence of RNA, the interaction is decreased. Interacts with FAM83A, FAM83B, FAM83E and FAM83H (via DUF1669). In terms of processing, autophosphorylated. Partially dephosphorylated by PPP5C. May be dephosphorylated by PP1. As to expression, expressed in all tissues examined, including brain, heart, lung, liver, pancreas, kidney, placenta and skeletal muscle. Expressed in monocytes and lymphocytes but not in granulocytes.

It is found in the cytoplasm. It localises to the nucleus. It catalyses the reaction L-seryl-[protein] + ATP = O-phospho-L-seryl-[protein] + ADP + H(+). The enzyme catalyses L-threonyl-[protein] + ATP = O-phospho-L-threonyl-[protein] + ADP + H(+). Its activity is regulated as follows. Phosphorylation leads to a decrease in the catalytic activity. In terms of biological role, casein kinases are operationally defined by their preferential utilization of acidic proteins such as caseins as substrates. Participates in Wnt signaling. Phosphorylates DVL1. Phosphorylates DVL2. Phosphorylates NEDD9/HEF1. Central component of the circadian clock. In balance with PP1, determines the circadian period length, through the regulation of the speed and rhythmicity of PER1 and PER2 phosphorylation. Controls PER1 and PER2 nuclear transport and degradation. Inhibits cytokine-induced granuloytic differentiation. This chain is Casein kinase I isoform epsilon (Csnk1e), found in Mus musculus (Mouse).